The sequence spans 383 residues: ATP phosphoribosyltransferase regulatory subunit (383 aa).

Belongs to the class-II aminoacyl-tRNA synthetase family. HisZ subfamily. As to quaternary structure, heteromultimer composed of HisG and HisZ subunits.

Its subcellular location is the cytoplasm. It participates in amino-acid biosynthesis; L-histidine biosynthesis; L-histidine from 5-phospho-alpha-D-ribose 1-diphosphate: step 1/9. In terms of biological role, required for the first step of histidine biosynthesis. May allow the feedback regulation of ATP phosphoribosyltransferase activity by histidine. This chain is ATP phosphoribosyltransferase regulatory subunit, found in Cupriavidus taiwanensis (strain DSM 17343 / BCRC 17206 / CCUG 44338 / CIP 107171 / LMG 19424 / R1) (Ralstonia taiwanensis (strain LMG 19424)).